Reading from the N-terminus, the 83-residue chain is Short neurotoxin OKI-01/OKI-19 (83 aa).

Residues 1–21 form the signal peptide; it reads MKTLLLTLVVVTIVCLDLGYT. Cystine bridges form between cysteine 24/cysteine 45, cysteine 38/cysteine 62, cysteine 64/cysteine 75, and cysteine 76/cysteine 81.

Belongs to the three-finger toxin family. Short-chain subfamily. Type I alpha-neurotoxin sub-subfamily. Expressed by the venom gland.

Its subcellular location is the secreted. In terms of biological role, binds to muscle nicotinic acetylcholine receptor (nAChR) and inhibit acetylcholine from binding to the receptor, thereby impairing neuromuscular transmission. The polypeptide is Short neurotoxin OKI-01/OKI-19 (Laticauda laticaudata (Blue-ringed sea krait)).